Reading from the N-terminus, the 498-residue chain is Probable dipeptidase B (498 aa).

C26 is an active-site residue.

Belongs to the peptidase C69 family.

It catalyses the reaction an L-aminoacyl-L-amino acid + H2O = 2 an L-alpha-amino acid. The chain is Probable dipeptidase B (pepDB) from Streptococcus pyogenes serotype M1.